A 453-amino-acid chain; its full sequence is UDP-glycosyltransferase 79B6 (453 aa).

Residues Ser266, 325 to 327 (VQQ), 342 to 350 (HCGFGSMWE), and 364 to 367 (LGEQ) contribute to the UDP-alpha-D-glucose site.

It belongs to the UDP-glycosyltransferase family.

The protein is UDP-glycosyltransferase 79B6 (UGT79B6) of Arabidopsis thaliana (Mouse-ear cress).